Reading from the N-terminus, the 448-residue chain is Exodeoxyribonuclease 7 large subunit (448 aa).

This sequence belongs to the XseA family. Heterooligomer composed of large and small subunits.

The protein resides in the cytoplasm. It carries out the reaction Exonucleolytic cleavage in either 5'- to 3'- or 3'- to 5'-direction to yield nucleoside 5'-phosphates.. Its function is as follows. Bidirectionally degrades single-stranded DNA into large acid-insoluble oligonucleotides, which are then degraded further into small acid-soluble oligonucleotides. The sequence is that of Exodeoxyribonuclease 7 large subunit from Nitrosomonas europaea (strain ATCC 19718 / CIP 103999 / KCTC 2705 / NBRC 14298).